The chain runs to 274 residues: Large ribosomal subunit protein uL2cz/uL2cy (274 aa).

Disordered stretches follow at residues 1-22 and 225-274; these read MAIH…DSQV and PVDH…RRSK.

It belongs to the universal ribosomal protein uL2 family. As to quaternary structure, part of the 50S ribosomal subunit.

The protein localises to the plastid. Its subcellular location is the chloroplast. This Nasturtium officinale (Watercress) protein is Large ribosomal subunit protein uL2cz/uL2cy (rpl2-A).